A 102-amino-acid chain; its full sequence is Small ribosomal subunit protein uS10 (102 aa).

It belongs to the universal ribosomal protein uS10 family. Part of the 30S ribosomal subunit.

Functionally, involved in the binding of tRNA to the ribosomes. The sequence is that of Small ribosomal subunit protein uS10 from Methanocorpusculum labreanum (strain ATCC 43576 / DSM 4855 / Z).